The sequence spans 410 residues: Probable intron-encoded endonuclease bI1 (410 aa).

A COB exon 1 encoded region spans residues 1 to 131; that stretch reads MRLLKTHPIL…VLMMAIAFLG (131 aa). Helical transmembrane passes span 32–52, 75–95, and 112–132; these read FGSLLGVCLIIQILTGVFLAM, GWLIRYLHANTASFFFIFVYL, and LLWSIGVIILVLMMAIAFLGF. Positions 132 to 410 are COB intron 1 encoded; the sequence is FNGQKYMCFY…KKNYIVKVIK (279 aa). The GIY-YIG domain occupies 196–286; the sequence is PFSGIYMIVN…LETLKPEYNI (91 aa).

The protein to endonucleases of group I introns of fungi and phage. In terms of processing, the mature protein may arise from proteolytic cleavage of an in-frame translation of COB exon 1 plus intron 1, containing the bI1 open reading frame.

It is found in the mitochondrion. Its subcellular location is the membrane. Functionally, mitochondrial DNA endonuclease involved in intron homing. The polypeptide is Probable intron-encoded endonuclease bI1 (bI1) (Mycosarcoma maydis (Corn smut fungus)).